The chain runs to 625 residues: Probable inactive receptor kinase At5g16590 (625 aa).

The N-terminal stretch at Met-1–Ser-23 is a signal peptide. LRR repeat units lie at residues Lys-88 to Thr-111, Leu-112 to Leu-134, Asn-136 to Ala-158, Arg-160 to Leu-182, and Gln-183 to Pro-204. Residues Ala-246 to Phe-266 traverse the membrane as a helical segment. The 271-residue stretch at Lys-343 to Val-613 folds into the Protein kinase domain. Ser-345 carries the post-translational modification Phosphoserine. ATP-binding positions include Leu-349–Ser-357 and Lys-371. Ser-422 carries the post-translational modification Phosphoserine. Thr-442 and Thr-496 each carry phosphothreonine. At Ser-517 the chain carries Phosphoserine. Thr-593 is modified (phosphothreonine). Phosphoserine occurs at positions 619 and 624.

The protein belongs to the protein kinase superfamily. Ser/Thr protein kinase family.

It is found in the cell membrane. Might be involved in early recognition of growth promoting fungi. Appears to be specific for P.indica. The polypeptide is Probable inactive receptor kinase At5g16590 (Arabidopsis thaliana (Mouse-ear cress)).